Reading from the N-terminus, the 201-residue chain is UPF0301 protein Bpet0561 (201 aa).

This sequence belongs to the UPF0301 (AlgH) family.

The sequence is that of UPF0301 protein Bpet0561 from Bordetella petrii (strain ATCC BAA-461 / DSM 12804 / CCUG 43448).